We begin with the raw amino-acid sequence, 185 residues long: Ribosome-recycling factor (185 aa).

The protein belongs to the RRF family.

It localises to the cytoplasm. In terms of biological role, responsible for the release of ribosomes from messenger RNA at the termination of protein biosynthesis. May increase the efficiency of translation by recycling ribosomes from one round of translation to another. The chain is Ribosome-recycling factor from Clostridium beijerinckii (strain ATCC 51743 / NCIMB 8052) (Clostridium acetobutylicum).